The following is a 163-amino-acid chain: Transcription antitermination protein NusB (163 aa).

Belongs to the NusB family.

Its function is as follows. Involved in transcription antitermination. Required for transcription of ribosomal RNA (rRNA) genes. Binds specifically to the boxA antiterminator sequence of the ribosomal RNA (rrn) operons. The polypeptide is Transcription antitermination protein NusB (Chlorobium luteolum (strain DSM 273 / BCRC 81028 / 2530) (Pelodictyon luteolum)).